Consider the following 347-residue polypeptide: Holliday junction branch migration complex subunit RuvB (347 aa).

The large ATPase domain (RuvB-L) stretch occupies residues 1-181 (MTRNSLLNPE…FGIPVRLQFY (181 aa)). ATP contacts are provided by Leu-20, Arg-21, Gly-62, Lys-65, Thr-66, Thr-67, Arg-171, Tyr-181, and Arg-218. Residue Thr-66 participates in Mg(2+) binding. The tract at residues 182 to 252 (SIEELRQVIT…IADEALNRLE (71 aa)) is small ATPAse domain (RuvB-S). Residues 255–347 (KLGLDLMDRR…SEIKNQPGLL (93 aa)) form a head domain (RuvB-H) region. Arg-291, Arg-310, and Arg-315 together coordinate DNA.

The protein belongs to the RuvB family. In terms of assembly, homohexamer. Forms an RuvA(8)-RuvB(12)-Holliday junction (HJ) complex. HJ DNA is sandwiched between 2 RuvA tetramers; dsDNA enters through RuvA and exits via RuvB. An RuvB hexamer assembles on each DNA strand where it exits the tetramer. Each RuvB hexamer is contacted by two RuvA subunits (via domain III) on 2 adjacent RuvB subunits; this complex drives branch migration. In the full resolvosome a probable DNA-RuvA(4)-RuvB(12)-RuvC(2) complex forms which resolves the HJ.

The protein localises to the cytoplasm. It carries out the reaction ATP + H2O = ADP + phosphate + H(+). The RuvA-RuvB-RuvC complex processes Holliday junction (HJ) DNA during genetic recombination and DNA repair, while the RuvA-RuvB complex plays an important role in the rescue of blocked DNA replication forks via replication fork reversal (RFR). RuvA specifically binds to HJ cruciform DNA, conferring on it an open structure. The RuvB hexamer acts as an ATP-dependent pump, pulling dsDNA into and through the RuvAB complex. RuvB forms 2 homohexamers on either side of HJ DNA bound by 1 or 2 RuvA tetramers; 4 subunits per hexamer contact DNA at a time. Coordinated motions by a converter formed by DNA-disengaged RuvB subunits stimulates ATP hydrolysis and nucleotide exchange. Immobilization of the converter enables RuvB to convert the ATP-contained energy into a lever motion, pulling 2 nucleotides of DNA out of the RuvA tetramer per ATP hydrolyzed, thus driving DNA branch migration. The RuvB motors rotate together with the DNA substrate, which together with the progressing nucleotide cycle form the mechanistic basis for DNA recombination by continuous HJ branch migration. Branch migration allows RuvC to scan DNA until it finds its consensus sequence, where it cleaves and resolves cruciform DNA. This is Holliday junction branch migration complex subunit RuvB from Zymomonas mobilis subsp. mobilis (strain ATCC 31821 / ZM4 / CP4).